The following is a 518-amino-acid chain: Motile sperm domain-containing protein 2 (518 aa).

Over 1–496 the chain is Cytoplasmic; sequence MAENNAQNKA…QLQRSIWFQQ (496 aa). The 155-residue stretch at 85-239 folds into the CRAL-TRIO domain; sequence IPRWLLELGG…HMGGTDPFKY (155 aa). A disordered region spans residues 252-312; that stretch reads PLCENGPIAS…KDENEKVDSK (61 aa). 2 stretches are compositionally biased toward basic and acidic residues: residues 265–279 and 300–312; these read TSSK…KETL and VSKK…VDSK. Positions 327–445 constitute an MSP domain; that stretch reads LLHISPAEEL…MEHRLRCHTV (119 aa). Residues 365–366 form a required for FFAT motif binding and phosphorylated FFAT motif binding region; sequence RT. A helical; Anchor for type IV membrane protein transmembrane segment spans residues 497–518; that stretch reads LLLALTMVLLDFVVSFFYSLYN.

In terms of assembly, homooligomer. Interacts (via MSP domain) with STARD3NL (via FFAT motif), RMDN3 (via FFAT motif), OSBPL1A (via FFAT motif) and CERT1 (via FFAT motif). Interacts (via MSP domain) with STARD3 (via phosphorylated FFAT motif); this interaction depends on the critical phosphorylation of STARD3 on 'Ser-209'. Interacts with RB1CC1 (via phosphorylated FFAT motif), MIGA2 (via phosphorylated FFAT motif) and OSBPL1A (via FFAT motif).

The protein resides in the endoplasmic reticulum membrane. In terms of biological role, endoplasmic reticulum-anchored protein that mediates the formation of contact sites between the endoplasmic (ER) and endosomes, mitochondria or Golgi through interaction with conventional- and phosphorylated-FFAT-containing organelle-bound proteins. In addition, forms endoplasmic reticulum (ER)-lipid droplets (LDs) contacts through a direct protein-membrane interaction and participates in LDs homeostasis. The attachment mechanism involves an amphipathic helix that has an affinity for lipid packing defects present at the surface of LDs. Promotes migration of primary monocytes and neutrophils, in response to various chemokines. The chain is Motile sperm domain-containing protein 2 from Mus musculus (Mouse).